A 93-amino-acid chain; its full sequence is Large ribosomal subunit protein uL23cz/uL23cy (93 aa).

This sequence belongs to the universal ribosomal protein uL23 family. In terms of assembly, part of the 50S ribosomal subunit.

It localises to the plastid. Its subcellular location is the chloroplast. Binds to 23S rRNA. The chain is Large ribosomal subunit protein uL23cz/uL23cy (rpl23-A) from Populus alba (White poplar).